The primary structure comprises 197 residues: Glycerol-3-phosphate acyltransferase (197 aa).

The next 5 helical transmembrane spans lie at 1-21 (MNIL…GFLI), 78-98 (LIEV…IWLG), 111-131 (MFLA…LIVL), 136-155 (FVSL…MFFY), and 159-176 (FIHT…LVIW).

It belongs to the PlsY family. As to quaternary structure, probably interacts with PlsX.

The protein localises to the cell inner membrane. The catalysed reaction is an acyl phosphate + sn-glycerol 3-phosphate = a 1-acyl-sn-glycero-3-phosphate + phosphate. It participates in lipid metabolism; phospholipid metabolism. Its function is as follows. Catalyzes the transfer of an acyl group from acyl-phosphate (acyl-PO(4)) to glycerol-3-phosphate (G3P) to form lysophosphatidic acid (LPA). This enzyme utilizes acyl-phosphate as fatty acyl donor, but not acyl-CoA or acyl-ACP. In Prochlorococcus marinus (strain MIT 9215), this protein is Glycerol-3-phosphate acyltransferase.